Here is a 501-residue protein sequence, read N- to C-terminus: 1-aminocyclopropane-1-carboxylate synthase-like protein 1 (501 aa).

Glu105 is a substrate binding site. Lys323 carries the post-translational modification N6-(pyridoxal phosphate)lysine. The tract at residues 480-501 (GKSQVAEDPRPSQSQEPSDQRR) is disordered. The span at 490 to 501 (PSQSQEPSDQRR) shows a compositional bias: polar residues.

This sequence belongs to the class-I pyridoxal-phosphate-dependent aminotransferase family.

Does not catalyze the synthesis of 1-aminocyclopropane-1-carboxylate but is capable of catalyzing the deamination of L-vinylglycine. In Homo sapiens (Human), this protein is 1-aminocyclopropane-1-carboxylate synthase-like protein 1 (ACCS).